The following is a 276-amino-acid chain: CTD small phosphatase-like protein (276 aa).

A disordered region spans residues 1–25; sequence MDGPAIITQVTNPKEDEGRLPGAGE. The FCP1 homology domain occupies 102–260; the sequence is LDYGKKCVVI…LDLIPFFEGL (159 aa). Residue aspartate 112 is the 4-aspartylphosphate intermediate of the active site. Residues aspartate 112, aspartate 114, and asparagine 223 each contribute to the Mg(2+) site. Aspartate 114 (proton donor) is an active-site residue.

In terms of assembly, interacts with REST. Monomer. It depends on Mg(2+) as a cofactor. Expression is restricted to non-neuronal tissues.

The protein resides in the nucleus. It carries out the reaction O-phospho-L-seryl-[protein] + H2O = L-seryl-[protein] + phosphate. The enzyme catalyses O-phospho-L-threonyl-[protein] + H2O = L-threonyl-[protein] + phosphate. Recruited by REST to neuronal genes that contain RE-1 elements, leading to neuronal gene silencing in non-neuronal cells. Preferentially catalyzes the dephosphorylation of 'Ser-5' within the tandem 7 residue repeats in the C-terminal domain (CTD) of the largest RNA polymerase II subunit POLR2A. Negatively regulates RNA polymerase II transcription, possibly by controlling the transition from initiation/capping to processive transcript elongation. This chain is CTD small phosphatase-like protein (CTDSPL), found in Homo sapiens (Human).